We begin with the raw amino-acid sequence, 277 residues long: Phosphatidylglycerol--prolipoprotein diacylglyceryl transferase (277 aa).

Helical transmembrane passes span 22 to 42, 59 to 79, 107 to 127, and 133 to 153; these read ISIR…YIVV, LFFY…CLFY, GYEG…LWLY, and MNYM…ACFI. Arg154 serves as a coordination point for a 1,2-diacyl-sn-glycero-3-phospho-(1'-sn-glycerol). 3 helical membrane-spanning segments follow: residues 186 to 206, 216 to 236, and 251 to 271; these read PAQL…MFLY, GFFF…VEFL, and MGQW…FFYG.

This sequence belongs to the Lgt family.

Its subcellular location is the cell inner membrane. The catalysed reaction is L-cysteinyl-[prolipoprotein] + a 1,2-diacyl-sn-glycero-3-phospho-(1'-sn-glycerol) = an S-1,2-diacyl-sn-glyceryl-L-cysteinyl-[prolipoprotein] + sn-glycerol 1-phosphate + H(+). Its pathway is protein modification; lipoprotein biosynthesis (diacylglyceryl transfer). In terms of biological role, catalyzes the transfer of the diacylglyceryl group from phosphatidylglycerol to the sulfhydryl group of the N-terminal cysteine of a prolipoprotein, the first step in the formation of mature lipoproteins. This is Phosphatidylglycerol--prolipoprotein diacylglyceryl transferase from Bacteroides fragilis (strain ATCC 25285 / DSM 2151 / CCUG 4856 / JCM 11019 / LMG 10263 / NCTC 9343 / Onslow / VPI 2553 / EN-2).